Consider the following 969-residue polypeptide: RNA polymerase-associated protein RapA (969 aa).

A Helicase ATP-binding domain is found at 164–334; sequence EVGRRHAPRV…FARLRLLDAD (171 aa). Residue 177-184 participates in ATP binding; that stretch reads DEVGLGKT. Residues 280–283 carry the DEAH box motif; sequence DEAH. The region spanning 492 to 646 is the Helicase C-terminal domain; the sequence is RVNWLLEKVK…TCPTGRAVYD (155 aa).

It belongs to the SNF2/RAD54 helicase family. RapA subfamily. Interacts with the RNAP. Has a higher affinity for the core RNAP than for the holoenzyme. Its ATPase activity is stimulated by binding to RNAP.

Functionally, transcription regulator that activates transcription by stimulating RNA polymerase (RNAP) recycling in case of stress conditions such as supercoiled DNA or high salt concentrations. Probably acts by releasing the RNAP, when it is trapped or immobilized on tightly supercoiled DNA. Does not activate transcription on linear DNA. Probably not involved in DNA repair. The sequence is that of RNA polymerase-associated protein RapA from Vibrio cholerae serotype O1 (strain ATCC 39315 / El Tor Inaba N16961).